The primary structure comprises 484 residues: Putative transporter B0252.3 (484 aa).

Helical transmembrane passes span 43–63, 95–115, 121–141, 144–164, 183–203, 208–228, 286–306, 321–341, 348–368, 373–393, and 433–453; these read ILTC…TGLC, STTT…PPLA, LPVF…SAFS, IMMF…AGLA, VYFG…AYIL, YLMF…YMTV, MFIV…FIYF, LNFV…PIFM, VLIS…VLSS, IHFW…IYMF, and LAPA…TLIL.

The protein belongs to the major facilitator superfamily. Sugar transporter (TC 2.A.1.1) family.

It is found in the membrane. The chain is Putative transporter B0252.3 from Caenorhabditis elegans.